The chain runs to 403 residues: Adenylate cyclase (403 aa).

Polar residues predominate over residues 1–16 (MSTEHTNTPRADSPQS). A disordered region spans residues 1–37 (MSTEHTNTPRADSPQSAAEAVRGARQHAPAATPAESD). Positions 31–60 (ATPAESDPILELAEAMEGPLRIPAHTPEAV) are pyruvate binding. The 110-residue stretch at 238-347 (AVGFADLVSY…PTVNMAARLT (110 aa)) folds into the Guanylate cyclase domain. Mg(2+) is bound by residues Asp243 and Asp287.

The protein belongs to the adenylyl cyclase class-3 family. In terms of assembly, homodimer. Requires Mg(2+) as cofactor.

The protein localises to the cytoplasm. The catalysed reaction is ATP = 3',5'-cyclic AMP + diphosphate. With respect to regulation, pyruvate-stimulated. In terms of biological role, plays essential roles in regulation of cellular metabolism by catalyzing the synthesis of a second messenger, cAMP. This chain is Adenylate cyclase (cya), found in Glutamicibacter nicotianae (Arthrobacter nicotianae).